The chain runs to 435 residues: Methanethiol oxidase (435 aa).

The signal sequence occupies residues 1 to 24 (MKKHLLAGACALAMGFAVIPGTFA).

It belongs to the selenium-binding protein family. Homotetramer. It depends on Cu cation as a cofactor.

It localises to the periplasm. It carries out the reaction methanethiol + O2 + H2O = hydrogen sulfide + formaldehyde + H2O2 + H(+). It participates in organosulfur degradation. With respect to regulation, inhibited by EDTA but not by EGTA. In terms of biological role, catalyzes the oxidation of methanethiol. Can also degrade ethanethiol, but not methanol, methylamine or dimethylsulfide. The protein is Methanethiol oxidase of Hyphomicrobium sp.